We begin with the raw amino-acid sequence, 534 residues long: CTP synthase (534 aa).

Positions 1–267 (MTKYIFVTGG…DQIVCDHLKL (267 aa)) are amidoligase domain. Position 13 (Ser-13) interacts with CTP. Ser-13 serves as a coordination point for UTP. An ATP-binding site is contributed by 14-19 (SIGKGI). Residue Tyr-54 participates in L-glutamine binding. Asp-71 contacts ATP. Asp-71 and Glu-141 together coordinate Mg(2+). Residues 148–150 (DIE), 188–193 (KTKPTQ), and Lys-224 contribute to the CTP site. UTP is bound by residues 188 to 193 (KTKPTQ) and Lys-224. 240-242 (RDV) contacts ATP. Residues 292–534 (KIALVGKYVE…FVTAAIKNSN (243 aa)) form the Glutamine amidotransferase type-1 domain. Position 354 (Gly-354) interacts with L-glutamine. Cys-381 functions as the Nucleophile; for glutamine hydrolysis in the catalytic mechanism. L-glutamine contacts are provided by residues 382–385 (LGMQ), Glu-405, and Arg-463. Residues His-508 and Glu-510 contribute to the active site.

The protein belongs to the CTP synthase family. Homotetramer.

The catalysed reaction is UTP + L-glutamine + ATP + H2O = CTP + L-glutamate + ADP + phosphate + 2 H(+). The enzyme catalyses L-glutamine + H2O = L-glutamate + NH4(+). It carries out the reaction UTP + NH4(+) + ATP = CTP + ADP + phosphate + 2 H(+). The protein operates within pyrimidine metabolism; CTP biosynthesis via de novo pathway; CTP from UDP: step 2/2. With respect to regulation, allosterically activated by GTP, when glutamine is the substrate; GTP has no effect on the reaction when ammonia is the substrate. The allosteric effector GTP functions by stabilizing the protein conformation that binds the tetrahedral intermediate(s) formed during glutamine hydrolysis. Inhibited by the product CTP, via allosteric rather than competitive inhibition. Catalyzes the ATP-dependent amination of UTP to CTP with either L-glutamine or ammonia as the source of nitrogen. Regulates intracellular CTP levels through interactions with the four ribonucleotide triphosphates. In Streptococcus pyogenes serotype M4 (strain MGAS10750), this protein is CTP synthase.